A 467-amino-acid chain; its full sequence is Constitutive acid phosphatase (467 aa).

A signal peptide spans 1-17 (MFKSVVYSVLAAALVNA). His75 acts as the Nucleophile in catalysis. Asn97, Asn103, Asn162, Asn192, Asn250, and Asn315 each carry an N-linked (GlcNAc...) asparagine glycan. Residue Asp338 is the Proton donor of the active site. 6 N-linked (GlcNAc...) asparagine glycosylation sites follow: Asn356, Asn390, Asn439, Asn445, Asn456, and Asn461.

This sequence belongs to the histidine acid phosphatase family.

It carries out the reaction a phosphate monoester + H2O = an alcohol + phosphate. The sequence is that of Constitutive acid phosphatase (PHO3) from Saccharomyces cerevisiae (strain ATCC 204508 / S288c) (Baker's yeast).